The sequence spans 263 residues: Cobalt-precorrin-6A reductase (263 aa).

Belongs to the precorrin-6x reductase family.

The catalysed reaction is Co-precorrin-6B + NAD(+) = Co-precorrin-6A + NADH + H(+). It functions in the pathway cofactor biosynthesis; adenosylcobalamin biosynthesis; cob(II)yrinate a,c-diamide from sirohydrochlorin (anaerobic route): step 7/10. Catalyzes the reduction of the macrocycle of cobalt-precorrin-6A to cobalt-precorrin-6B. The sequence is that of Cobalt-precorrin-6A reductase (cbiJ) from Salmonella typhimurium (strain LT2 / SGSC1412 / ATCC 700720).